We begin with the raw amino-acid sequence, 239 residues long: Short palate, lung and nasal epithelium carcinoma-associated protein 2A (239 aa).

The first 20 residues, 1–20 (MVQLWKLVLLCGLLAGTSES), serve as a signal peptide directing secretion. Cysteines 166 and 209 form a disulfide.

The protein belongs to the BPI/LBP/Plunc superfamily. Plunc family. Detected in salivary tissues: parotid, submandibular and sublingual glands.

It localises to the secreted. The polypeptide is Short palate, lung and nasal epithelium carcinoma-associated protein 2A (SPLUNC2A) (Bos taurus (Bovine)).